Reading from the N-terminus, the 97-residue chain is Large ribosomal subunit protein uL23 (97 aa).

Belongs to the universal ribosomal protein uL23 family. Part of the 50S ribosomal subunit. Contacts protein L29, and trigger factor when it is bound to the ribosome.

Its function is as follows. One of the early assembly proteins it binds 23S rRNA. One of the proteins that surrounds the polypeptide exit tunnel on the outside of the ribosome. Forms the main docking site for trigger factor binding to the ribosome. The sequence is that of Large ribosomal subunit protein uL23 from Agrobacterium fabrum (strain C58 / ATCC 33970) (Agrobacterium tumefaciens (strain C58)).